A 201-amino-acid polypeptide reads, in one-letter code: Recombination protein RecR (201 aa).

The C4-type zinc-finger motif lies at cysteine 57–cysteine 72. The 96-residue stretch at glycine 81 to proline 176 folds into the Toprim domain.

The protein belongs to the RecR family.

May play a role in DNA repair. It seems to be involved in an RecBC-independent recombinational process of DNA repair. It may act with RecF and RecO. This chain is Recombination protein RecR, found in Shigella boydii serotype 18 (strain CDC 3083-94 / BS512).